Reading from the N-terminus, the 78-residue chain is Small ribosomal subunit protein uS17 (78 aa).

Belongs to the universal ribosomal protein uS17 family. As to quaternary structure, part of the 30S ribosomal subunit.

Functionally, one of the primary rRNA binding proteins, it binds specifically to the 5'-end of 16S ribosomal RNA. The protein is Small ribosomal subunit protein uS17 of Agrobacterium fabrum (strain C58 / ATCC 33970) (Agrobacterium tumefaciens (strain C58)).